The chain runs to 655 residues: p-hydroxybenzoic acid efflux pump subunit AaeB (655 aa).

Transmembrane regions (helical) follow at residues 13–33 (FAVKLACAIVLALFIGFHFQL), 38–58 (WAVLTAAIVAAGPAFAAGGEP), 69–89 (LRIIGTFIGCIAALIIIISMI), 93–113 (LLMILVCCVWAGFCTWISSLV), 121–141 (WGLSGYTALIIVITIQTEPLL), 152–172 (EIVIGIGCAILADLLFSPRSI), 370–390 (LFWLWTGWTSGNGAMVMIAVV), 407–427 (FIYGTLAALPLGLLYFLVIIP), 431–451 (QSMLLLCLSLAVLGFFIGIEV), 459–479 (MGALASTINIIVLDNPMTFHF), and 482–502 (FLDSALGQIVGCMLAFIVILL).

The protein belongs to the aromatic acid exporter ArAE (TC 2.A.85) family.

Its subcellular location is the cell inner membrane. Its function is as follows. Forms an efflux pump with AaeA. Could function as a metabolic relief valve, allowing to eliminate certain compounds when they accumulate to high levels in the cell. The protein is p-hydroxybenzoic acid efflux pump subunit AaeB of Salmonella enteritidis PT4 (strain P125109).